The primary structure comprises 431 residues: Interleukin-11 receptor subunit alpha (431 aa).

The first 23 residues, 1–23, serve as a signal peptide directing secretion; it reads MSSSRSGLTRVLVAVATALVSSS. The Extracellular segment spans residues 24–371; the sequence is TPCPQAWGPP…DPLEQVAVLA (348 aa). The 84-residue stretch at 27-110 folds into the Ig-like C2-type domain; it reads PQAWGPPGVQ…FGGMVTLKLG (84 aa). 3 disulfide bridges follow: cysteine 48-cysteine 94, cysteine 120-cysteine 130, and cysteine 170-cysteine 180. Fibronectin type-III domains follow at residues 112 to 219 and 220 to 317; these read PPAR…LRPD and PPQG…TPST. An N-linked (GlcNAc...) asparagine glycan is attached at asparagine 127. The disordered stretch occupies residues 151–170; it reads KTLPGAESQRESPSTGPWPC. A glycan (N-linked (GlcNAc...) asparagine) is linked at asparagine 194. The short motif at 304-308 is the WSXWS motif element; that stretch reads WSAWS. Residues 310–360 are disordered; sequence EAWGTPSTGPLRDEVPDGSRGHEQKLEAAAQEDSPAPPSPSLQPDPRPLDH. A compositionally biased stretch (basic and acidic residues) spans 320-335; sequence LRDEVPDGSRGHEQKL. Residues 344–355 are compositionally biased toward pro residues; it reads PAPPSPSLQPDP. The chain crosses the membrane as a helical span at residues 372-392; the sequence is SLGIFSFLGLAVGALALGLWL. At 393–431 the chain is on the cytoplasmic side; the sequence is RLRRSGKDGPQKPGFLAPMIPGDKLPGIPNLQRTPENFS. Residues 402-431 form a disordered region; sequence PQKPGFLAPMIPGDKLPGIPNLQRTPENFS.

This sequence belongs to the type I cytokine receptor family. Type 3 subfamily. As to quaternary structure, on IL11 binding, forms a multimer complex with IL6ST/gp130. In terms of processing, a short soluble form is also released from the membrane by proteolysis. The sIL11RA is formed either by limited proteolysis of membrane-bound receptors, a process referred to as ectodomain shedding, or directly secreted from the cells after alternative mRNA splicing. mIL11RA is cleaved by the proteases ADAM10, ELANE and PRTN3.

It is found in the membrane. The protein localises to the secreted. Functionally, receptor for interleukin-11 (IL11). The receptor systems for IL6, LIF, OSM, CNTF, IL11 and CT1 can utilize IL6ST for initiating signal transmission. The IL11/IL11RA/IL6ST complex may be involved in the control of proliferation and/or differentiation of skeletogenic progenitor or other mesenchymal cells. Essential for the normal development of craniofacial bones and teeth. Restricts suture fusion and tooth number. Its function is as follows. Soluble form of IL11 receptor (sIL11RA) that acts as an agonist of IL11 activity. The IL11:sIL11RA complex binds to IL6ST/gp130 on cell surfaces and induces signaling also on cells that do not express membrane-bound IL11RA in a process called IL11 trans-signaling. The protein is Interleukin-11 receptor subunit alpha of Rattus norvegicus (Rat).